A 248-amino-acid chain; its full sequence is Triosephosphate isomerase (248 aa).

14–16 (NWK) is a binding site for substrate. Histidine 99 serves as the catalytic Electrophile. The active-site Proton acceptor is the glutamate 170. Substrate is bound by residues glycine 176, serine 212, and 233–234 (GG).

This sequence belongs to the triosephosphate isomerase family. In terms of assembly, homodimer.

The protein resides in the cytoplasm. It carries out the reaction D-glyceraldehyde 3-phosphate = dihydroxyacetone phosphate. The protein operates within carbohydrate biosynthesis; gluconeogenesis. It participates in carbohydrate degradation; glycolysis; D-glyceraldehyde 3-phosphate from glycerone phosphate: step 1/1. In terms of biological role, involved in the gluconeogenesis. Catalyzes stereospecifically the conversion of dihydroxyacetone phosphate (DHAP) to D-glyceraldehyde-3-phosphate (G3P). In Bordetella bronchiseptica (strain ATCC BAA-588 / NCTC 13252 / RB50) (Alcaligenes bronchisepticus), this protein is Triosephosphate isomerase.